We begin with the raw amino-acid sequence, 362 residues long: GMP reductase (362 aa).

NADP(+) contacts are provided by residues 26–27 (SR), Lys-78, 129–131 (DVA), and 180–181 (IG). Gly-181, Gly-183, and Cys-186 together coordinate K(+). The Thioimidate intermediate role is filled by Cys-186. The active-site Proton donor/acceptor is the Thr-188. Position 189 (Arg-189) interacts with K(+). Residues 219 to 221 (DGG), 242 to 243 (GG), 268 to 270 (GMS), and 286 to 290 (RASEG) contribute to the GMP site. NADP(+) is bound by residues Met-269, 285-286 (YR), and 314-317 (STCT).

It belongs to the IMPDH/GMPR family.

The enzyme catalyses IMP + NH4(+) + NADP(+) = GMP + NADPH + 2 H(+). Functionally, catalyzes the irreversible NADPH-dependent deamination of GMP to IMP. It functions in the conversion of nucleobase, nucleoside and nucleotide derivatives of G to A nucleotides, and in maintaining the intracellular balance of A and G nucleotides. In Phytophthora infestans (Potato late blight agent), this protein is GMP reductase.